The following is a 384-amino-acid chain: Homoserine O-succinyltransferase (384 aa).

One can recognise an AB hydrolase-1 domain in the interval 51–361; sequence NAILICHALS…ETSQGHDAFL (311 aa). S157 functions as the Nucleophile in the catalytic mechanism. R227 is a substrate binding site. Catalysis depends on residues D324 and H357. Residue D358 participates in substrate binding.

This sequence belongs to the AB hydrolase superfamily. MetX family. Homodimer.

It localises to the cytoplasm. It catalyses the reaction L-homoserine + succinyl-CoA = O-succinyl-L-homoserine + CoA. The protein operates within amino-acid biosynthesis; L-methionine biosynthesis via de novo pathway; O-succinyl-L-homoserine from L-homoserine: step 1/1. In terms of biological role, transfers a succinyl group from succinyl-CoA to L-homoserine, forming succinyl-L-homoserine. The sequence is that of Homoserine O-succinyltransferase from Alkalilimnicola ehrlichii (strain ATCC BAA-1101 / DSM 17681 / MLHE-1).